Reading from the N-terminus, the 291-residue chain is Transcription factor bHLH53 (291 aa).

Residues 163–212 (PTLSSQSIAARGRRRRIAEKTHELGKLIPGGNKLNTAEMFQAAAKYVKFL) form the bHLH domain.

As to quaternary structure, homodimer. Expressed constitutively in roots, leaves, stems, and flowers.

The protein resides in the nucleus. The chain is Transcription factor bHLH53 (BHLH53) from Arabidopsis thaliana (Mouse-ear cress).